Here is a 347-residue protein sequence, read N- to C-terminus: NADH-ubiquinone oxidoreductase chain 2 (347 aa).

The next 11 helical transmembrane spans lie at 1–21, 25–45, 68–88, 96–116, 122–142, 145–165, 178–198, 201–221, 239–259, 274–294, and 326–346; these read MNPM…SIVL, HWFL…PVLM, MILV…TIMI, MLIT…FWVP, VSLS…LSLL, IFPS…IMIG, IMAY…IYNP, SLLN…LLII, IVVS…PLTG, SSVM…FFYM, and MMSL…LITL.

It belongs to the complex I subunit 2 family. In terms of assembly, core subunit of respiratory chain NADH dehydrogenase (Complex I) which is composed of 45 different subunits. Interacts with TMEM242.

The protein resides in the mitochondrion inner membrane. It catalyses the reaction a ubiquinone + NADH + 5 H(+)(in) = a ubiquinol + NAD(+) + 4 H(+)(out). Its function is as follows. Core subunit of the mitochondrial membrane respiratory chain NADH dehydrogenase (Complex I) which catalyzes electron transfer from NADH through the respiratory chain, using ubiquinone as an electron acceptor. Essential for the catalytic activity and assembly of complex I. In Sylvisorex lunaris (Moon forest shrew), this protein is NADH-ubiquinone oxidoreductase chain 2.